We begin with the raw amino-acid sequence, 383 residues long: MDGRTRMQIDFARQPPSRVGIEWELACVDRGSGELAGVAPQILRSFPHDDAHPHVTGEFLTNTVEVVSAPHSRVGHAVDDLARLIERVVDVADPLGIDLMCAGTHPFSAWPDQDVTPDNERYATLLDRTRWWGRQMMIWGVHVHVGIEDGSKALPILNALLVHLPRFQALSASSPFWSGQETGYASNRALMFQQLPTAGLPPDLTTWADYERLIGDMTHVGVIDHHSELRWDIRPAPKWGTLETRVFDGVSTLGEIASLAALVQCLVHDLSAALDRGEELPRMQPWFVRENKWRAARYGMDAIIIQDAAGEEALVGDDTRALVERLSPTADALGCEAELRGILDIVDRGASYQRQLRVAEENDGALAPVVTHLVEELRSGLGR.

Belongs to the glutamate--cysteine ligase type 2 family. YbdK subfamily.

It catalyses the reaction L-cysteine + L-glutamate + ATP = gamma-L-glutamyl-L-cysteine + ADP + phosphate + H(+). Its function is as follows. ATP-dependent carboxylate-amine ligase which exhibits weak glutamate--cysteine ligase activity. This is Putative glutamate--cysteine ligase 2 from Clavibacter sepedonicus (Clavibacter michiganensis subsp. sepedonicus).